The chain runs to 523 residues: Bifunctional purine biosynthesis protein PurH (523 aa).

An MGS-like domain is found at methionine 1–threonine 154.

It belongs to the PurH family.

The enzyme catalyses (6R)-10-formyltetrahydrofolate + 5-amino-1-(5-phospho-beta-D-ribosyl)imidazole-4-carboxamide = 5-formamido-1-(5-phospho-D-ribosyl)imidazole-4-carboxamide + (6S)-5,6,7,8-tetrahydrofolate. It carries out the reaction IMP + H2O = 5-formamido-1-(5-phospho-D-ribosyl)imidazole-4-carboxamide. The protein operates within purine metabolism; IMP biosynthesis via de novo pathway; 5-formamido-1-(5-phospho-D-ribosyl)imidazole-4-carboxamide from 5-amino-1-(5-phospho-D-ribosyl)imidazole-4-carboxamide (10-formyl THF route): step 1/1. Its pathway is purine metabolism; IMP biosynthesis via de novo pathway; IMP from 5-formamido-1-(5-phospho-D-ribosyl)imidazole-4-carboxamide: step 1/1. The protein is Bifunctional purine biosynthesis protein PurH of Streptomyces coelicolor (strain ATCC BAA-471 / A3(2) / M145).